The following is a 328-amino-acid chain: Formimidoylglutamase (328 aa).

Mn(2+) is bound by residues His133, Asp159, His161, Asp163, Asp253, and Asp255.

Belongs to the arginase family. Mn(2+) serves as cofactor.

It carries out the reaction N-formimidoyl-L-glutamate + H2O = formamide + L-glutamate. It functions in the pathway amino-acid degradation; L-histidine degradation into L-glutamate; L-glutamate from N-formimidoyl-L-glutamate (hydrolase route): step 1/1. Its function is as follows. Catalyzes the conversion of N-formimidoyl-L-glutamate to L-glutamate and formamide. The chain is Formimidoylglutamase from Streptococcus pyogenes serotype M6 (strain ATCC BAA-946 / MGAS10394).